The chain runs to 283 residues: Thymidylate synthase (283 aa).

Residue arginine 22 participates in dUMP binding. Catalysis depends on cysteine 160, which acts as the Nucleophile. DUMP contacts are provided by residues 180-183, asparagine 191, and 221-223; these read RSCD and HIY. (6R)-5,10-methylene-5,6,7,8-tetrahydrofolate is bound at residue aspartate 183. Serine 282 is a binding site for (6R)-5,10-methylene-5,6,7,8-tetrahydrofolate.

It belongs to the thymidylate synthase family. Bacterial-type ThyA subfamily. Homodimer.

The protein resides in the cytoplasm. The enzyme catalyses dUMP + (6R)-5,10-methylene-5,6,7,8-tetrahydrofolate = 7,8-dihydrofolate + dTMP. Its pathway is pyrimidine metabolism; dTTP biosynthesis. Catalyzes the reductive methylation of 2'-deoxyuridine-5'-monophosphate (dUMP) to 2'-deoxythymidine-5'-monophosphate (dTMP) while utilizing 5,10-methylenetetrahydrofolate (mTHF) as the methyl donor and reductant in the reaction, yielding dihydrofolate (DHF) as a by-product. This enzymatic reaction provides an intracellular de novo source of dTMP, an essential precursor for DNA biosynthesis. The protein is Thymidylate synthase of Vibrio atlanticus (strain LGP32) (Vibrio splendidus (strain Mel32)).